Consider the following 270-residue polypeptide: tRNA pseudouridine synthase A (270 aa).

Catalysis depends on Asp-51, which acts as the Nucleophile. Substrate is bound at residue Tyr-109.

Belongs to the tRNA pseudouridine synthase TruA family. Homodimer.

It carries out the reaction uridine(38/39/40) in tRNA = pseudouridine(38/39/40) in tRNA. Its function is as follows. Formation of pseudouridine at positions 38, 39 and 40 in the anticodon stem and loop of transfer RNAs. This chain is tRNA pseudouridine synthase A, found in Burkholderia thailandensis (strain ATCC 700388 / DSM 13276 / CCUG 48851 / CIP 106301 / E264).